Here is a 374-residue protein sequence, read N- to C-terminus: Biotin synthase (374 aa).

The region spanning Asn49 to Arg276 is the Radical SAM core domain. Residues Cys64, Cys68, and Cys71 each contribute to the [4Fe-4S] cluster site. 4 residues coordinate [2Fe-2S] cluster: Cys108, Cys139, Cys199, and Arg271. The interval Gln344 to Ala374 is disordered.

The protein belongs to the radical SAM superfamily. Biotin synthase family. Homodimer. [4Fe-4S] cluster serves as cofactor. Requires [2Fe-2S] cluster as cofactor.

It catalyses the reaction (4R,5S)-dethiobiotin + (sulfur carrier)-SH + 2 reduced [2Fe-2S]-[ferredoxin] + 2 S-adenosyl-L-methionine = (sulfur carrier)-H + biotin + 2 5'-deoxyadenosine + 2 L-methionine + 2 oxidized [2Fe-2S]-[ferredoxin]. Its pathway is cofactor biosynthesis; biotin biosynthesis; biotin from 7,8-diaminononanoate: step 2/2. Its function is as follows. Catalyzes the conversion of dethiobiotin (DTB) to biotin by the insertion of a sulfur atom into dethiobiotin via a radical-based mechanism. The chain is Biotin synthase from Alteromonas mediterranea (strain DSM 17117 / CIP 110805 / LMG 28347 / Deep ecotype).